The following is a 518-amino-acid chain: Glutamate--cysteine ligase (518 aa).

The protein belongs to the glutamate--cysteine ligase type 1 family. Type 1 subfamily.

The enzyme catalyses L-cysteine + L-glutamate + ATP = gamma-L-glutamyl-L-cysteine + ADP + phosphate + H(+). It participates in sulfur metabolism; glutathione biosynthesis; glutathione from L-cysteine and L-glutamate: step 1/2. This is Glutamate--cysteine ligase from Escherichia coli O139:H28 (strain E24377A / ETEC).